A 198-amino-acid chain; its full sequence is TM2 domain-containing protein 2 (198 aa).

Positions 1-27 (MRWPVPPVGYLLLGGQGLLLTFSLISS) are cleaved as a signal peptide. At 28-128 (QNQTSPVTYP…FLRGNKPCIK (101 aa)) the chain is on the extracellular side. Asn29, Asn40, and Asn76 each carry an N-linked (GlcNAc...) asparagine glycan. A helical transmembrane segment spans residues 129 to 149 (YTGHYFITTLLYSFFLGCFGV). One can recognise a TM2 domain in the interval 131-179 (GHYFITTLLYSFFLGCFGVDRFCLGHTGTAVGKLLTLGGLGIWWFVDLI). Residues 150 to 166 (DRFCLGHTGTAVGKLLT) are Cytoplasmic-facing. Residues 167-187 (LGGLGIWWFVDLILLITGGLM) form a helical membrane-spanning segment. Residues 188–198 (PSDNSNWCTIY) lie on the Extracellular side of the membrane.

It belongs to the TM2 family.

It is found in the membrane. The polypeptide is TM2 domain-containing protein 2 (tm2d2) (Xenopus tropicalis (Western clawed frog)).